Here is a 361-residue protein sequence, read N- to C-terminus: Protein TIFY 8 (361 aa).

Disordered stretches follow at residues asparagine 53 to serine 78, arginine 113 to threonine 134, glutamine 190 to leucine 232, and serine 268 to threonine 361. Low complexity predominate over residues alanine 56–serine 78. 2 stretches are compositionally biased toward polar residues: residues arginine 113–threonine 127 and serine 208–leucine 232. Positions leucine 232 to serine 267 constitute a Tify domain. Residues glycine 333–threonine 361 are compositionally biased toward basic and acidic residues.

Belongs to the TIFY/JAZ family. In terms of assembly, interacts with AFPH2/NINJA. Post-translationally, ubiquitinated. Targeted for degradation by the SCF(COI1) E3 ubiquitin ligase-proteasome pathway during jasmonate signaling.

It localises to the nucleus. Its function is as follows. Repressor of jasmonate responses. The protein is Protein TIFY 8 of Arabidopsis thaliana (Mouse-ear cress).